A 558-amino-acid polypeptide reads, in one-letter code: CTP synthase (558 aa).

The amidoligase domain stretch occupies residues 1-267 (MTKFVFVTGG…AQQTLELLNL (267 aa)). Serine 13 serves as a coordination point for CTP. Serine 13 contacts UTP. Residues 14–19 (SIGKGI) and aspartate 71 contribute to the ATP site. The Mg(2+) site is built by aspartate 71 and glutamate 141. CTP contacts are provided by residues 148–150 (DIE), 188–193 (KTKPTQ), and lysine 224. Residues 188–193 (KTKPTQ) and lysine 224 each bind UTP. The 243-residue stretch at 292–534 (EVALVGKYVQ…VKASVDYNHV (243 aa)) folds into the Glutamine amidotransferase type-1 domain. Glycine 354 contributes to the L-glutamine binding site. Cysteine 381 functions as the Nucleophile; for glutamine hydrolysis in the catalytic mechanism. L-glutamine is bound by residues 382–385 (MGMQ), glutamate 405, and arginine 462. Catalysis depends on residues histidine 507 and glutamate 509.

The protein belongs to the CTP synthase family. Homotetramer.

The enzyme catalyses UTP + L-glutamine + ATP + H2O = CTP + L-glutamate + ADP + phosphate + 2 H(+). It catalyses the reaction L-glutamine + H2O = L-glutamate + NH4(+). The catalysed reaction is UTP + NH4(+) + ATP = CTP + ADP + phosphate + 2 H(+). Its pathway is pyrimidine metabolism; CTP biosynthesis via de novo pathway; CTP from UDP: step 2/2. Allosterically activated by GTP, when glutamine is the substrate; GTP has no effect on the reaction when ammonia is the substrate. The allosteric effector GTP functions by stabilizing the protein conformation that binds the tetrahedral intermediate(s) formed during glutamine hydrolysis. Inhibited by the product CTP, via allosteric rather than competitive inhibition. Catalyzes the ATP-dependent amination of UTP to CTP with either L-glutamine or ammonia as the source of nitrogen. Regulates intracellular CTP levels through interactions with the four ribonucleotide triphosphates. The polypeptide is CTP synthase (Gloeothece citriformis (strain PCC 7424) (Cyanothece sp. (strain PCC 7424))).